We begin with the raw amino-acid sequence, 205 residues long: Guanylate kinase (205 aa).

Positions 19 to 197 (PKLFTISAPA…AYRVLKSIFI (179 aa)) constitute a Guanylate kinase-like domain. ATP is bound at residue 26 to 33 (APAGVGKT).

Belongs to the guanylate kinase family.

The protein localises to the cytoplasm. The enzyme catalyses GMP + ATP = GDP + ADP. In terms of biological role, essential for recycling GMP and indirectly, cGMP. This Chlamydia pneumoniae (Chlamydophila pneumoniae) protein is Guanylate kinase (gmk).